The following is a 114-amino-acid chain: Flagellar hook-basal body complex protein FliE (114 aa).

This sequence belongs to the FliE family.

The protein localises to the bacterial flagellum basal body. The chain is Flagellar hook-basal body complex protein FliE from Burkholderia multivorans (strain ATCC 17616 / 249).